Here is a 395-residue protein sequence, read N- to C-terminus: Elongation factor Tu (395 aa).

Positions 10–205 (KPHVNIGTIG…AVDSYIPMPE (196 aa)) constitute a tr-type G domain. Residues 19 to 26 (GHIDHGKT) are G1. GTP is bound at residue 19 to 26 (GHIDHGKT). Thr-26 serves as a coordination point for Mg(2+). Residues 61 to 65 (GITIA) are G2. A G3 region spans residues 82 to 85 (DCPG). GTP is bound by residues 82–86 (DCPGH) and 137–140 (NKVD). The tract at residues 137-140 (NKVD) is G4. The interval 175-177 (SAL) is G5.

Belongs to the TRAFAC class translation factor GTPase superfamily. Classic translation factor GTPase family. EF-Tu/EF-1A subfamily. In terms of assembly, monomer.

It is found in the cytoplasm. The enzyme catalyses GTP + H2O = GDP + phosphate + H(+). GTP hydrolase that promotes the GTP-dependent binding of aminoacyl-tRNA to the A-site of ribosomes during protein biosynthesis. The sequence is that of Elongation factor Tu from Solibacter usitatus (strain Ellin6076).